We begin with the raw amino-acid sequence, 271 residues long: GATA transcription factor 19 (271 aa).

The tract at residues 1–23 is disordered; that stretch reads MAAEPPADGRDPPADDGAAGDGA. A Tify domain is found at 33-68; it reads LSAASEQLTLVYQGEVYVFDPVPPQKVQAVLLVLGG. Residues 95-137 enclose the CCT domain; sequence RIASLMRFREKRKERCFDKKIRYSVRKEVAQKMKRRKGQFAGR. Residues 166–193 form a GATA-type zinc finger; sequence CQNCGISSRLTPAMRRGPAGPRSLCNAC. The disordered stretch occupies residues 238 to 271; it reads NQTTMKTDTEMVPEQEQKADVLPPTKEEDSMATS. The segment covering 252 to 271 has biased composition (basic and acidic residues); the sequence is QEQKADVLPPTKEEDSMATS.

The protein belongs to the type IV zinc-finger family. Class C subfamily.

The protein localises to the nucleus. Functionally, transcriptional activator that specifically binds 5'-GATA-3' or 5'-GAT-3' motifs within gene promoters. In Oryza sativa subsp. indica (Rice), this protein is GATA transcription factor 19.